We begin with the raw amino-acid sequence, 333 residues long: MKTLGQFIVEKQAEYPNAKGELSGILSSIRLVAKVIHRDINKAGLTNNIIGTSGAENVQGETQMKLDLFAHNTMKQALISREEVAGFASEEEENFVAFDTERGRNAKYVILTDPLDGSSNIDVNVAVGTIFSIYRRVSPIGTPVTLADFMQPGNRQVAAGYIVYGSSTMLVYTTGNGVNGFTYDPSLGVFCLSHENIQIPANGKIYSINEGQYLKFPQGVKKYIKYCQEEDKATHRPYTSRYIGSLVSDFHRNMLKGGIYIYPSATNYPNGKLRLLYEGNPMAFLAEQAGGMASDGYQRILDIQPTELHQRVPLFLGSKEMVEKAQDFMKTFG.

Mg(2+) is bound by residues Glu90, Asp113, Leu115, and Asp116. Substrate contacts are provided by residues Asp116–Ser119, Asn209, Tyr242, and Lys272. A Mg(2+)-binding site is contributed by Glu278.

The protein belongs to the FBPase class 1 family. Homotetramer. It depends on Mg(2+) as a cofactor.

Its subcellular location is the cytoplasm. The enzyme catalyses beta-D-fructose 1,6-bisphosphate + H2O = beta-D-fructose 6-phosphate + phosphate. It participates in carbohydrate biosynthesis; gluconeogenesis. The sequence is that of Fructose-1,6-bisphosphatase class 1 from Pasteurella multocida (strain Pm70).